The chain runs to 305 residues: MKQLQVLLVAGTHGNEINGIWLFDEWKKSSFLINTHGIKTFQVIGNPEAKKAGKRYIHHDLNRSFKEGSFIKINPLNCERTRASELVNLYGEAGENPCQIALDFHTTTASMGSCIVVYGRRDADLALASLIQNQLGLPVYLHESDQKQTGFLVESWPCGLVVEIGPIGQGLLNSRIISQTKLILETLMEQIHEVKNLNLFFPNKLIIHRHIKSIDFPRDEEGNIDGYVHSLRQSKDWQELKKNDELFCKLNGEIIRFEEDEPYIPVFINEAAYVEKNIAMSFTKRELWNFKKEWKQALIDLIHQK.

Residues H13 and E16 each contribute to the Zn(2+) site. Substrate contacts are provided by residues R55 and 62-63 (NR). H105 is a binding site for Zn(2+). Positions 163 and 273 each coordinate substrate.

The protein belongs to the AspA/AstE family. Aspartoacylase subfamily. The cofactor is Zn(2+).

The enzyme catalyses an N-acyl-L-aspartate + H2O = a carboxylate + L-aspartate. The protein is Probable aspartoacylase of Prochlorococcus marinus (strain NATL1A).